The following is a 930-amino-acid chain: uncharacterized protein (930 aa).

The first 20 residues, Met-1–Thr-20, serve as a signal peptide directing secretion. Asn-137, Asn-146, Asn-164, Asn-210, Asn-257, Asn-628, Asn-717, and Asn-799 each carry an N-linked (GlcNAc...) asparagine glycan.

The protein localises to the secreted. This is an uncharacterized protein from Arthroderma benhamiae (strain ATCC MYA-4681 / CBS 112371) (Trichophyton mentagrophytes).